The following is a 225-amino-acid chain: UPF0758 protein Shew185_0376 (225 aa).

Residues 102–224 form the MPN domain; that stretch reads VLTNPDLTRD…IVSFAERGWI (123 aa). Positions 173, 175, and 186 each coordinate Zn(2+). The short motif at 173–186 is the JAMM motif element; it reads HNHPSGNAEPSQAD.

The protein belongs to the UPF0758 family.

The protein is UPF0758 protein Shew185_0376 of Shewanella baltica (strain OS185).